Reading from the N-terminus, the 697-residue chain is MARTTPLERYRNFGIMAHIDAGKTTTTERILFYTGVTHKIGEVHEGTTVMDWMEQERERGITITSAATTAFWRDHRLNIIDTPGHVDFTIEVERSLRVLDGACAVFDAVQGVQPQSETVWRQADKYEVPRICFINKMDRVGADYFHAVDTIREKLGARPLPLHVPIGAEDKFRGMVDLLKMKGITFDDETMGAKYQEVEIPADLAAQAKEYRAKLEETVAEIDDELMAKYLDGKPLSNDELMRGIRRGTLEMKFFPVLCGTAFKNKGVQQILDAVVDFLPSPVDIPAMKGVDAKGNDVVRKTSDAEPFSALAFKIMNDPFVGNLTFFRVYSGRLEAGSYVYNSTKDKKERIGRLLQMHANKREEIKEVYAGDIAAAVGLRASTTGDTLCAEDAPVILERMEFPEPVIHIAIEPKTKGDQDKMGVALQRLQMEDPSFRVHTDEETGQTIIGGMGELHLEILVDRMFREFKVEANVGKPQVAYRETITRTVEAEGRYIRQTGGRGQYGHCWLRLHPQEPGKGFEFENAIVGGVIPKEFISPIQKGIEEAMTSGVLAGYPMVDLKVELFDGSYHDVDSSEMAFKIAGSMGFKEGAAKASPVLLEPIMAVEVTTPDDYMGDVIGDLNSRRGKIHAMNPRAGVQVIEAHVPLAEMFGYATDLRSKTQGRATYSMQFAHYAQVPASIAETIVTKAKGVAAGAK.

Residues 8–283 (ERYRNFGIMA…AVVDFLPSPV (276 aa)) enclose the tr-type G domain. Residues 17-24 (AHIDAGKT), 81-85 (DTPGH), and 135-138 (NKMD) each bind GTP.

Belongs to the TRAFAC class translation factor GTPase superfamily. Classic translation factor GTPase family. EF-G/EF-2 subfamily.

It is found in the cytoplasm. Catalyzes the GTP-dependent ribosomal translocation step during translation elongation. During this step, the ribosome changes from the pre-translocational (PRE) to the post-translocational (POST) state as the newly formed A-site-bound peptidyl-tRNA and P-site-bound deacylated tRNA move to the P and E sites, respectively. Catalyzes the coordinated movement of the two tRNA molecules, the mRNA and conformational changes in the ribosome. The polypeptide is Elongation factor G 1 (Anaeromyxobacter dehalogenans (strain 2CP-C)).